A 210-amino-acid chain; its full sequence is Signal peptidase complex catalytic subunit SEC11 (210 aa).

The Cytoplasmic segment spans residues Met-1–Asn-21. The helical; Signal-anchor for type II membrane protein transmembrane segment at Phe-22–Ile-38 threads the bilayer. Over Tyr-39 to Glu-210 the chain is Lumenal. Asn-41 carries an N-linked (GlcNAc...) asparagine glycan. Catalysis depends on charge relay system residues Ser-53, His-92, and Asp-152. Residues Val-196–Leu-207 are C-terminal short (CTS) helix.

Belongs to the peptidase S26B family. As to quaternary structure, component of the signal peptidase complex (SPC) composed of a catalytic subunit SEC11 and three accessory subunits SPC1, SPC2 and SPC3. The complex induces a local thinning of the ER membrane which is used to measure the length of the signal peptide (SP) h-region of protein substrates. This ensures the selectivity of the complex towards h-regions shorter than 18-20 amino acids. SPC associates with the translocon complex.

Its subcellular location is the endoplasmic reticulum membrane. It catalyses the reaction Cleavage of hydrophobic, N-terminal signal or leader sequences from secreted and periplasmic proteins.. Catalytic component of the signal peptidase complex (SPC) which catalyzes the cleavage of N-terminal signal sequences from nascent proteins as they are translocated into the lumen of the endoplasmic reticulum. Specifically cleaves N-terminal signal peptides that contain a hydrophobic alpha-helix (h-region) shorter than 18-20 amino acids. The sequence is that of Signal peptidase complex catalytic subunit SEC11 (SEC11) from Coccidioides posadasii (strain C735) (Valley fever fungus).